The sequence spans 313 residues: Aspartoacylase (313 aa).

His-21 and Glu-24 together coordinate Zn(2+). Positions 63, 70, and 71 each coordinate N-acetyl-L-aspartate. A Zn(2+)-binding site is contributed by His-116. 2 residues coordinate N-acetyl-L-aspartate: Tyr-164 and Arg-168. The Proton donor/acceptor role is filled by Glu-178. Tyr-288 is an N-acetyl-L-aspartate binding site.

It belongs to the AspA/AstE family. Aspartoacylase subfamily. Homodimer. Zn(2+) serves as cofactor.

The protein localises to the cytoplasm. It is found in the nucleus. It carries out the reaction an N-acyl-L-aspartate + H2O = a carboxylate + L-aspartate. The enzyme catalyses N-acetyl-L-aspartate + H2O = L-aspartate + acetate. Catalyzes the deacetylation of N-acetylaspartic acid (NAA) to produce acetate and L-aspartate. NAA occurs in high concentration in brain and its hydrolysis NAA plays a significant part in the maintenance of intact white matter. In other tissues it acts as a scavenger of NAA from body fluids. The protein is Aspartoacylase of Pongo abelii (Sumatran orangutan).